Here is a 115-residue protein sequence, read N- to C-terminus: Iron-sulfur cluster insertion protein ErpA (115 aa).

The iron-sulfur cluster site is built by Cys42, Cys106, and Cys108.

Belongs to the HesB/IscA family. As to quaternary structure, homodimer. Requires iron-sulfur cluster as cofactor.

Its function is as follows. Required for insertion of 4Fe-4S clusters for at least IspG. The sequence is that of Iron-sulfur cluster insertion protein ErpA from Baumannia cicadellinicola subsp. Homalodisca coagulata.